A 278-amino-acid chain; its full sequence is Shikimate dehydrogenase (NADP(+)) (278 aa).

Shikimate contacts are provided by residues 15-17 (SMS) and Thr62. The active-site Proton acceptor is Lys66. Glu78 is a binding site for NADP(+). Residues Asn87 and Asp102 each contribute to the shikimate site. NADP(+)-binding positions include 127 to 131 (GAGGA), 151 to 156 (NRTPEK), and Ile217. Residue Tyr219 coordinates shikimate. Gly240 serves as a coordination point for NADP(+).

The protein belongs to the shikimate dehydrogenase family. Homodimer.

It carries out the reaction shikimate + NADP(+) = 3-dehydroshikimate + NADPH + H(+). It functions in the pathway metabolic intermediate biosynthesis; chorismate biosynthesis; chorismate from D-erythrose 4-phosphate and phosphoenolpyruvate: step 4/7. In terms of biological role, involved in the biosynthesis of the chorismate, which leads to the biosynthesis of aromatic amino acids. Catalyzes the reversible NADPH linked reduction of 3-dehydroshikimate (DHSA) to yield shikimate (SA). This Bacillus licheniformis (strain ATCC 14580 / DSM 13 / JCM 2505 / CCUG 7422 / NBRC 12200 / NCIMB 9375 / NCTC 10341 / NRRL NRS-1264 / Gibson 46) protein is Shikimate dehydrogenase (NADP(+)).